The chain runs to 533 residues: Calcium uptake protein 1 homolog, mitochondrial (533 aa).

The transit peptide at 1–13 (MLRHNFRSSIFIR) directs the protein to the mitochondrion. Residues 127-147 (PFRPEASQKEESTDSGTEIEV) are disordered. EF-hand domains lie at 270-305 (TSHA…IMSQ), 337-358 (KDGK…LQHD), and 465-500 (LSDH…RMRR). Positions 283, 285, 287, and 294 each coordinate Ca(2+).

It belongs to the MICU1 family. MICU1 subfamily.

Its subcellular location is the mitochondrion intermembrane space. It localises to the mitochondrion inner membrane. Functionally, calcium sensor of the mitochondrial calcium uniporter (mcu-1) channel, which senses calcium level via its EF-hand domains. At low calcium levels, micu-1 occludes the pore of the mcu-1 channel, preventing mitochondrial calcium uptake. At higher calcium levels, calcium-binding to micu-1 induces a conformational change that weakens mcu-1-micu-1 interactions and moves micu-1 away from the pore, allowing calcium permeation through the mcu-1 channel. Also required to protect against manganese toxicity by preventing manganese uptake by mcu-1. Modulates the activity of the mitochondrial calcium uniporter protein mcu-1 depending on the level of intracellular calcium in PLM touch receptor neurons following axonal injury. This chain is Calcium uptake protein 1 homolog, mitochondrial, found in Caenorhabditis briggsae.